We begin with the raw amino-acid sequence, 141 residues long: Putative pre-16S rRNA nuclease (141 aa).

The protein belongs to the YqgF nuclease family.

The protein resides in the cytoplasm. Functionally, could be a nuclease involved in processing of the 5'-end of pre-16S rRNA. This Pseudomonas putida (strain ATCC 47054 / DSM 6125 / CFBP 8728 / NCIMB 11950 / KT2440) protein is Putative pre-16S rRNA nuclease.